We begin with the raw amino-acid sequence, 139 residues long: Putative pre-16S rRNA nuclease (139 aa).

Belongs to the YqgF nuclease family.

The protein resides in the cytoplasm. Could be a nuclease involved in processing of the 5'-end of pre-16S rRNA. The polypeptide is Putative pre-16S rRNA nuclease (Rubrobacter xylanophilus (strain DSM 9941 / JCM 11954 / NBRC 16129 / PRD-1)).